The sequence spans 1000 residues: Vacuolar sorting protein 39 (1000 aa).

Positions 16-282 constitute a CNH domain; the sequence is PARIDAVESY…RRLVKSNNAV (267 aa). The interval 394–413 is disordered; the sequence is DEASLSRGSSGISDDMESSS. The stretch at 607-796 is one CHCR repeat; that stretch reads YSMLVLESCP…YLNPKKSAKD (190 aa). The tract at residues 844 to 864 is disordered; it reads GLSSSTDSGRSDVDTEEPLEE.

This sequence belongs to the VAM6/VPS39 family. As to quaternary structure, homooligomer. Component of the homotypic fusion and vacuole protein sorting (HOPS) complex composed of the class C Vps core proteins VPS11, VCL1, VPS18 and VPS33, which in HOPS further associates with VPS39 and VPS41. Interacts directly with VPS11. Binds to RABG3B.

The protein localises to the cytoplasm. The protein resides in the vacuole membrane. Essential protein required during embryogenesis. Believed to act in part as a component of the putative HOPS endosomal tethering complex. HOPS is required for the central vacuole formation. May play a role in clustering and fusion of late endosomes and lysosomes. Plays a role in vesicle-mediated protein trafficking to lysosomal compartments including the endocytic membrane transport and autophagic pathways. Required for fusion of endosomes and autophagosomes with lysosomes. This is Vacuolar sorting protein 39 from Arabidopsis thaliana (Mouse-ear cress).